The following is a 353-amino-acid chain: Mitogen-activated protein kinase mpkB (353 aa).

Positions 21-309 constitute a Protein kinase domain; it reads YEIQDVIGEG…VEEALRHPYL (289 aa). ATP is bound by residues 27–35 and Lys50; that span reads IGEGAYGVV. The Proton acceptor role is filled by Asp145.

The protein belongs to the protein kinase superfamily. Ser/Thr protein kinase family. MAP kinase subfamily. The cofactor is Mg(2+).

The protein resides in the nucleus. It catalyses the reaction L-seryl-[protein] + ATP = O-phospho-L-seryl-[protein] + ADP + H(+). It carries out the reaction L-threonyl-[protein] + ATP = O-phospho-L-threonyl-[protein] + ADP + H(+). Its activity is regulated as follows. Activated by threonine and tyrosine phosphorylation. In terms of biological role, mitogen-activated protein kinase (MAPK) that plays a role in conidiation and regulation of secondary metabolite biosynthesis. Acts as a repressor of dihydroxynaphthalene (DHN)-melanin production. This chain is Mitogen-activated protein kinase mpkB, found in Aspergillus fumigatus (strain CBS 144.89 / FGSC A1163 / CEA10) (Neosartorya fumigata).